The primary structure comprises 644 residues: Protein lin-9 (644 aa).

The disordered stretch occupies residues 1–77 (MSSAVRSPRK…GRDSPSVNSL (77 aa)). Over residues 50–62 (SIKRTGSPKKSPA) the composition is skewed to basic residues.

Belongs to the lin-9 family. In terms of assembly, component of the DRM complex, at least composed of lin-9, lin-35, lin-37, lin-52, lin-53, lin-54- dpl-1 and efl-1. Interacts with zft-11; the interaction is required to suppress the activation of non-neuronal genes in neurons.

The protein resides in the nucleus. Synthetic multivulva class B (synMuvB) protein. SynMuvB proteins are required to repress the induction of vulval development by Ras signaling and probably act by forming the multiprotein DRM complex that represses transcription. Required for the development of sheath cells in the hermaphrodite gonad and for the development of the male spicule, rays and gonad. In association with the zinc finger protein ztf-11, negatively regulates the expression of non-neuronal genes during neurogenesis. The polypeptide is Protein lin-9 (Caenorhabditis elegans).